Here is a 135-residue protein sequence, read N- to C-terminus: ATP synthase epsilon chain (135 aa).

It belongs to the ATPase epsilon chain family. F-type ATPases have 2 components, CF(1) - the catalytic core - and CF(0) - the membrane proton channel. CF(1) has five subunits: alpha(3), beta(3), gamma(1), delta(1), epsilon(1). CF(0) has three main subunits: a, b and c.

It localises to the cell inner membrane. Its function is as follows. Produces ATP from ADP in the presence of a proton gradient across the membrane. The chain is ATP synthase epsilon chain from Mesorhizobium japonicum (strain LMG 29417 / CECT 9101 / MAFF 303099) (Mesorhizobium loti (strain MAFF 303099)).